Consider the following 594-residue polypeptide: Homeobox protein prospero homolog 1 (594 aa).

2 stretches are compositionally biased toward polar residues: residues 1-13 (MSSG…ATAQ) and 36-50 (PPVN…SSNR). 3 disordered regions span residues 1–20 (MSSG…NGFS), 30–180 (IYYS…FQPQ), and 358–389 (DTSS…SASA). The segment covering 73-101 (STSVSSNSSSSSSTSNTNSTPSSSSTSSK) has biased composition (low complexity). Positions 105-117 (EGMTETETMTASI) are enriched in polar residues. Basic and acidic residues predominate over residues 118 to 135 (EQEKVIQNEESEAGKDGM). Over residues 136-162 (EEHDDGMNDFEIIDDTNDEVEESEERE) the composition is skewed to acidic residues. Residues 369-378 (KVEIKKEDAM) are compositionally biased toward basic and acidic residues. The span at 379–389 (SSRASPLSASA) shows a compositional bias: low complexity. In terms of domain architecture, Prospero-type homeo spans 435 to 493 (SSMLTPMHLRKAKLMFFYTRYPNSNLLKSYFPDIRFNKNNTAQLVKWFSNFREFYYNQM). The tract at residues 435-593 (SSMLTPMHLR…KEPNFLERLE (159 aa)) is homeo-Prospero. The Prospero domain occupies 494–593 (EKFARQALAE…KEPNFLERLE (100 aa)).

It belongs to the Prospero homeodomain family.

It localises to the nucleus. In terms of biological role, transcription factor involved in developmental processes. Controls the transcription of genes required for excretory canal formation. The polypeptide is Homeobox protein prospero homolog 1 (Caenorhabditis elegans).